The chain runs to 652 residues: Zinc finger protein 432 (652 aa).

Residues 8–79 (LTLEDVTVEF…EDERHSRICP (72 aa)) form the KRAB domain. Residue Tyr-41 is modified to 3'-nitrotyrosine. Residues Ser-139 and Ser-164 each carry the ADP-ribosylserine modification. 16 C2H2-type zinc fingers span residues 205–227 (HVCS…ERVH), 233–255 (YGCT…QRIH), 261–283 (FICS…QRTH), 289–311 (YICN…QRNH), 317–339 (YICS…QRTH), 345–367 (YICS…QRNH), 373–395 (YICN…QRTH), 401–423 (YICS…QRNH), 429–451 (YLCS…QRTH), 457–479 (YTCS…QRTH), 485–507 (YRCS…QRTH), 513–535 (YICN…QRTH), 541–563 (FMCS…QQIH), 567–591 (KSCI…KQVH), 597–619 (YGCN…QRTH), and 625–647 (FVCS…QRTH). Ser-246 is modified (ADP-ribosylserine). Ser-330 bears the ADP-ribosylserine mark. Ser-414 is modified (ADP-ribosylserine).

It belongs to the krueppel C2H2-type zinc-finger protein family. Interacts with PARP1 and several chromatin remodeling proteins; the interaction with PARP1 reshapes ZNF432 interacting proteins. Interacts with TRIM28; the interaction is independent of PARP1.

It localises to the nucleus. Functionally, homologous recombination repressor that functions as a poly(ADP-ribose) (PAR) reader regulating DNA damage response and PARP inhibition. Once recruited to DNA lesions via DNA-, in a PAR-dependent mechanism, stimulates PARP1 activity. Binds preferentially ssDNA and inhibits EXO1-mediated resection, probably through a PAR-independent DNA-binding mechanism. The polypeptide is Zinc finger protein 432 (Homo sapiens (Human)).